Reading from the N-terminus, the 510-residue chain is 2,3-bisphosphoglycerate-independent phosphoglycerate mutase (510 aa).

Asp12 and Ser62 together coordinate Mn(2+). Catalysis depends on Ser62, which acts as the Phosphoserine intermediate. Substrate is bound by residues His121, 151 to 152 (RD), Arg183, Arg189, 258 to 261 (RPDR), and Lys331. Mn(2+)-binding residues include Asp398, His402, Asp439, His440, and His458.

This sequence belongs to the BPG-independent phosphoglycerate mutase family. As to quaternary structure, monomer. The cofactor is Mn(2+).

The enzyme catalyses (2R)-2-phosphoglycerate = (2R)-3-phosphoglycerate. It participates in carbohydrate degradation; glycolysis; pyruvate from D-glyceraldehyde 3-phosphate: step 3/5. Catalyzes the interconversion of 2-phosphoglycerate and 3-phosphoglycerate. The chain is 2,3-bisphosphoglycerate-independent phosphoglycerate mutase from Clostridioides difficile (strain 630) (Peptoclostridium difficile).